The sequence spans 296 residues: Syntenin-2 (296 aa).

2 consecutive PDZ domains span residues 112 to 191 (EIHL…VRDR) and 196 to 271 (TVTM…IPTV).

As to quaternary structure, monomer and homodimer. Interacts with SDCBP. Interacts with TM4SF1.

It is found in the cytoplasm. The protein resides in the nucleus. It localises to the nucleolus. Its subcellular location is the nucleoplasm. The protein localises to the cell membrane. It is found in the nucleus speckle. Its function is as follows. Binds phosphatidylinositol 4,5-bisphosphate (PIP2). May play a role in the organization of nuclear PIP2, cell division and cell survival. The polypeptide is Syntenin-2 (Sdcbp2) (Rattus norvegicus (Rat)).